A 372-amino-acid chain; its full sequence is F-box/kelch-repeat protein At4g14905 (372 aa).

In terms of domain architecture, F-box spans 34–74 (LHDEIAVSCFARVPRCYYPAISLVCRNFRRLMASPEIYIER). Kelch repeat units follow at residues 137–183 (ETYV…LIDG), 184–229 (KLYV…FFVM), and 232–280 (KIYR…CMNQ).

This chain is F-box/kelch-repeat protein At4g14905, found in Arabidopsis thaliana (Mouse-ear cress).